Reading from the N-terminus, the 204-residue chain is UPF0134 protein MPN_655 (204 aa).

Residues 46 to 132 (EVENKPKIPI…FNEFKDSNNQ (87 aa)) form a disordered region. Residues 64–80 (SPKPLKPPKPPKPPKGP) are compositionally biased toward pro residues. Over residues 117–132 (YVTRKEFNEFKDSNNQ) the composition is skewed to basic and acidic residues.

It belongs to the UPF0134 family.

This Mycoplasma pneumoniae (strain ATCC 29342 / M129 / Subtype 1) (Mycoplasmoides pneumoniae) protein is UPF0134 protein MPN_655.